Here is a 690-residue protein sequence, read N- to C-terminus: Guanylate cyclase soluble subunit alpha-1 (690 aa).

At Ser-266 the chain carries Phosphoserine. Positions 480–607 constitute a Guanylate cyclase domain; that stretch reads TMLFSDIVGF…NNVTLANKFE (128 aa).

This sequence belongs to the adenylyl cyclase class-4/guanylyl cyclase family. The active enzyme is formed by a heterodimer of an alpha and a beta subunit. Heterodimer with GUCY1B1. Mg(2+) serves as cofactor. The cofactor is Mn(2+).

Its subcellular location is the cytoplasm. It carries out the reaction GTP = 3',5'-cyclic GMP + diphosphate. Activated by nitric oxide in the presence of magnesium or manganese ions. In Rattus norvegicus (Rat), this protein is Guanylate cyclase soluble subunit alpha-1 (Gucy1a1).